The following is a 330-amino-acid chain: DNA-directed RNA polymerase subunit alpha (330 aa).

Positions 1 to 232 (MAILAFQKPD…YHFMLFSDEK (232 aa)) are alpha N-terminal domain (alpha-NTD). The segment at 248-330 (EEVLHMRQLL…DISKYKLDKE (83 aa)) is alpha C-terminal domain (alpha-CTD).

This sequence belongs to the RNA polymerase alpha chain family. Homodimer. The RNAP catalytic core consists of 2 alpha, 1 beta, 1 beta' and 1 omega subunit. When a sigma factor is associated with the core the holoenzyme is formed, which can initiate transcription.

The enzyme catalyses RNA(n) + a ribonucleoside 5'-triphosphate = RNA(n+1) + diphosphate. DNA-dependent RNA polymerase catalyzes the transcription of DNA into RNA using the four ribonucleoside triphosphates as substrates. This Bacteroides thetaiotaomicron (strain ATCC 29148 / DSM 2079 / JCM 5827 / CCUG 10774 / NCTC 10582 / VPI-5482 / E50) protein is DNA-directed RNA polymerase subunit alpha.